A 91-amino-acid polypeptide reads, in one-letter code: Tityustoxin-19 (91 aa).

The first 25 residues, 1–25 (MVATNRCCVFALLFALLLVHSLTEA), serve as a signal peptide directing secretion. The region spanning 58-91 (EYACPAIDKFCEDHCAAKKAVGKCDDFKCNCIKL) is the BetaSPN-type CS-alpha/beta domain. 3 disulfide bridges follow: C61-C81, C68-C86, and C72-C88.

This sequence belongs to the long chain scorpion toxin family. Class 2 subfamily. As to expression, expressed by the venom gland.

It localises to the secreted. Its function is as follows. May function as a voltage-gated potassium channel blocker and may have cytolytic activity. Is often not detected in the tested venom fractions, suggesting that the toxin is likely subject to frequent processing within the venom. Functionally, specific and reversible blocker of the potassium channel Kv1.2/KCNA2 (IC(50)=544 nM). In terms of biological role, shows cytolytic effects on erythrocytes and induces non-selective pore formation when high concentrations (300 nM) are applied on oocytes. Does not cause hemolysis, mast cell degranulation, LDH release, and does not have antimicrobial activity. Does not cause edema and pain. In Tityus serrulatus (Brazilian scorpion), this protein is Tityustoxin-19.